We begin with the raw amino-acid sequence, 406 residues long: RILP-like protein 1 (406 aa).

In terms of domain architecture, RH1 spans 5 to 99 (QLGAALDKSA…LEKEKKHKKE (95 aa)). Positions 105-319 (DVWRGEAQDL…KVFMLQEEIA (215 aa)) form a coiled coil. Disordered stretches follow at residues 234–272 (EVSSLRQEVSRLKEKLKEQSRSNEEEAQEPVGPPSPAQE) and 323–351 (SEEQEEENGPPLPDPSETLRTNPRSNFQP). The span at 241–257 (EVSRLKEKLKEQSRSNE) shows a compositional bias: basic and acidic residues. In terms of domain architecture, RH2 spans 289–358 (RPRFTLQELR…FQPESGIKRL (70 aa)). The segment covering 340 to 351 (TLRTNPRSNFQP) has biased composition (polar residues).

It belongs to the RILPL family.

Its subcellular location is the cytoplasm. The protein resides in the cytosol. It localises to the cytoskeleton. It is found in the microtubule organizing center. The protein localises to the centrosome. Its subcellular location is the cell projection. The protein resides in the cilium. Its function is as follows. Plays a role in the regulation of cell shape and polarity. Plays a role in cellular protein transport, including protein transport away from primary cilia. Neuroprotective protein. This Danio rerio (Zebrafish) protein is RILP-like protein 1 (rilpl1).